The primary structure comprises 124 residues: Alpha-amylase inhibitor 0.19 (124 aa).

5 cysteine pairs are disulfide-bonded: Cys-6/Cys-52, Cys-20/Cys-41, Cys-28/Cys-83, Cys-42/Cys-99, and Cys-54/Cys-115.

The protein belongs to the protease inhibitor I6 (cereal trypsin/alpha-amylase inhibitor) family. In terms of assembly, homodimer. In terms of processing, the disulfide bonds are essential for the inhibitor activity. As to expression, endosperm.

The protein localises to the secreted. Its function is as follows. Alpha-amylase inhibitor. The chain is Alpha-amylase inhibitor 0.19 from Triticum aestivum (Wheat).